A 190-amino-acid polypeptide reads, in one-letter code: E3 ubiquitin-protein ligase RNF183 (190 aa).

Residues 1–159 (MSEPQGQELR…RECVRNPHFR (159 aa)) are Cytoplasmic-facing. The segment at 13–60 (CPVCWNPFNNTFHTPKVLDCCHSFCVECLAHLSLVTPARRRLLCPLCR) adopts an RING-type zinc-finger fold. The chain crosses the membrane as a helical; Anchor for type IV membrane protein span at residues 160–180 (IFAYLMAVILSVTLLLIFSIF). The Lumenal portion of the chain corresponds to 181 to 190 (WTKQFFWGMG).

As to quaternary structure, interacts with FATE1. Interacts with SEC16A. Interacts with BCL2L1. Autoubiquitinated (in vitro). As to expression, highly expressed in the kidney and testis.

It localises to the endoplasmic reticulum membrane. Its subcellular location is the endoplasmic reticulum. It is found in the golgi apparatus. The protein localises to the cis-Golgi network membrane. The protein resides in the lysosome membrane. The catalysed reaction is S-ubiquitinyl-[E2 ubiquitin-conjugating enzyme]-L-cysteine + [acceptor protein]-L-lysine = [E2 ubiquitin-conjugating enzyme]-L-cysteine + N(6)-ubiquitinyl-[acceptor protein]-L-lysine.. Its pathway is protein modification; protein ubiquitination. In terms of biological role, acts as an E3 ubiquitin ligase catalyzing the covalent attachment of ubiquitin moieties onto substrate proteins. Triggers apoptosis in response to prolonged ER stress by mediating the polyubiquitination and subsequent proteasomal degradation of BCL2L1. May collaborate with FATE1 to restrain BIK protein levels thus regulating apoptotic signaling. This is E3 ubiquitin-protein ligase RNF183 (Rnf183) from Mus musculus (Mouse).